The chain runs to 355 residues: uncharacterized protein (355 aa).

It belongs to the 3-beta-HSD family.

This is an uncharacterized protein from Frog virus 3 (isolate Goorha) (FV-3).